The primary structure comprises 177 residues: MSRVAKAPVVVPAGVDVKVNGQVITIKGKNGELTRTLNDAVEVKHADNALTFGPRDGYVDGWAQAGTARALLNSMVIGVTEGFTKKLQLVGVGYRAAVKGDVVNLALGFSHPVEHKLPAGITAECPTQTEIVLKGADKQVIGQVAADLRAYRRPEPYKGKGVRYADEVVRTKEAKKK.

The protein belongs to the universal ribosomal protein uL6 family. Part of the 50S ribosomal subunit.

This protein binds to the 23S rRNA, and is important in its secondary structure. It is located near the subunit interface in the base of the L7/L12 stalk, and near the tRNA binding site of the peptidyltransferase center. This Klebsiella pneumoniae (strain 342) protein is Large ribosomal subunit protein uL6.